The chain runs to 201 residues: MSKVLVLKSSILAGYSQSNQLSDYFVEQWREKHSADEITVRDLAANPIPVLDGELVGALRPSDAPLTPRQQEALALSDELIAELKAHDVIVIAAPMYNFNISTQLKNYFDLVARAGVTFRYTENGPEGLVTGKKAIVITSRGGIHKDGPTDLVTPYLSTFLGFIGITDVKFVFAEGIAYGPEMAAKAQSDAKAAIDSIVAA.

FMN contacts are provided by residues serine 10, serine 16–serine 18, methionine 96–phenylalanine 99, and serine 140–glycine 143.

Belongs to the azoreductase type 1 family. Homodimer. It depends on FMN as a cofactor.

It carries out the reaction 2 a quinone + NADH + H(+) = 2 a 1,4-benzosemiquinone + NAD(+). The catalysed reaction is N,N-dimethyl-1,4-phenylenediamine + anthranilate + 2 NAD(+) = 2-(4-dimethylaminophenyl)diazenylbenzoate + 2 NADH + 2 H(+). Its function is as follows. Quinone reductase that provides resistance to thiol-specific stress caused by electrophilic quinones. Functionally, also exhibits azoreductase activity. Catalyzes the reductive cleavage of the azo bond in aromatic azo compounds to the corresponding amines. The sequence is that of FMN-dependent NADH:quinone oxidoreductase from Shigella boydii serotype 4 (strain Sb227).